Reading from the N-terminus, the 243-residue chain is UPF0758 protein PCC7424_2073 (243 aa).

An MPN domain is found at 112 to 235 (VEINDPVSAV…HQSLRTVTDL (124 aa)). H184, H186, and D197 together coordinate Zn(2+). A JAMM motif motif is present at residues 184–197 (HNHPSGNVAPSQED).

Belongs to the UPF0758 family.

This Gloeothece citriformis (strain PCC 7424) (Cyanothece sp. (strain PCC 7424)) protein is UPF0758 protein PCC7424_2073.